The primary structure comprises 93 residues: Small ribosomal subunit protein uS19 (93 aa).

This sequence belongs to the universal ribosomal protein uS19 family.

In terms of biological role, protein S19 forms a complex with S13 that binds strongly to the 16S ribosomal RNA. This Clavibacter michiganensis subsp. michiganensis (strain NCPPB 382) protein is Small ribosomal subunit protein uS19.